The following is a 321-amino-acid chain: Phospho-N-acetylmuramoyl-pentapeptide-transferase (321 aa).

Transmembrane regions (helical) follow at residues 1–21 (MIFIYAIIALLITFILVPILI), 50–70 (MGGLTFLISIIISSIIAIIFV), 76–96 (IILLLFVTIGFGLIGFIDDYI), 112–132 (FLAQIIIAVIFFVLSDVFHLV), 140–160 (IPFVNFDIPLSFAYVIFIVFW), 176–196 (GLATGLSIIGFAMYAVMSYML), 200–220 (AIGIFCIIMIFALLGFLPYNL), 225–245 (VFMGDTGSLALGGIFATISIM), 250–270 (LSLILIGFVFVVETLSVMLQV), and 300–320 (VVTVFWTVGLITGLIGLWIGV).

The protein belongs to the glycosyltransferase 4 family. MraY subfamily. Mg(2+) is required as a cofactor.

The protein resides in the cell membrane. It carries out the reaction UDP-N-acetyl-alpha-D-muramoyl-L-alanyl-gamma-D-glutamyl-L-lysyl-D-alanyl-D-alanine + di-trans,octa-cis-undecaprenyl phosphate = Mur2Ac(oyl-L-Ala-gamma-D-Glu-L-Lys-D-Ala-D-Ala)-di-trans,octa-cis-undecaprenyl diphosphate + UMP. Its pathway is cell wall biogenesis; peptidoglycan biosynthesis. Functionally, catalyzes the initial step of the lipid cycle reactions in the biosynthesis of the cell wall peptidoglycan: transfers peptidoglycan precursor phospho-MurNAc-pentapeptide from UDP-MurNAc-pentapeptide onto the lipid carrier undecaprenyl phosphate, yielding undecaprenyl-pyrophosphoryl-MurNAc-pentapeptide, known as lipid I. In Staphylococcus epidermidis (strain ATCC 12228 / FDA PCI 1200), this protein is Phospho-N-acetylmuramoyl-pentapeptide-transferase.